The primary structure comprises 296 residues: Regulatory protein PchR (296 aa).

The 96-residue stretch at H201 to R296 folds into the HTH araC/xylS-type domain. DNA-binding regions (H-T-H motif) lie at residues D218–F239 and V266–Y288.

Functionally, positive activator of the genes for pyochelin and ferripyochelin receptors. This is Regulatory protein PchR (pchR) from Pseudomonas aeruginosa (strain ATCC 15692 / DSM 22644 / CIP 104116 / JCM 14847 / LMG 12228 / 1C / PRS 101 / PAO1).